A 123-amino-acid chain; its full sequence is Large ribosomal subunit protein uL14 (123 aa).

This sequence belongs to the universal ribosomal protein uL14 family. In terms of assembly, part of the 50S ribosomal subunit. Forms a cluster with proteins L3 and L19. In the 70S ribosome, L14 and L19 interact and together make contacts with the 16S rRNA in bridges B5 and B8.

In terms of biological role, binds to 23S rRNA. Forms part of two intersubunit bridges in the 70S ribosome. This is Large ribosomal subunit protein uL14 from Erwinia tasmaniensis (strain DSM 17950 / CFBP 7177 / CIP 109463 / NCPPB 4357 / Et1/99).